Here is a 554-residue protein sequence, read N- to C-terminus: Inactive sesquithujene synthase B (554 aa).

Mg(2+) contacts are provided by D308 and D312. Substrate contacts are provided by D308, D312, R449, and N452. The short motif at 308 to 312 is the DDXXD motif element; it reads DDMFD. N452, S456, and E460 together coordinate Mg(2+).

Belongs to the terpene synthase family. In terms of assembly, monomer. The cofactor is Mg(2+). Mn(2+) serves as cofactor.

It localises to the cytoplasm. Its pathway is secondary metabolite biosynthesis; terpenoid biosynthesis. Its function is as follows. Non-functional sesquiterpene synthase having less than 1% of the activity found in TPS5A. The sequence is that of Inactive sesquithujene synthase B from Zea mays (Maize).